A 286-amino-acid polypeptide reads, in one-letter code: Probable endonuclease 4 (286 aa).

Residues His-72, His-112, Glu-147, Asp-181, His-184, His-215, Asp-228, His-230, and Glu-260 each coordinate Zn(2+).

It belongs to the AP endonuclease 2 family. Requires Zn(2+) as cofactor.

It carries out the reaction Endonucleolytic cleavage to 5'-phosphooligonucleotide end-products.. In terms of biological role, endonuclease IV plays a role in DNA repair. It cleaves phosphodiester bonds at apurinic or apyrimidinic (AP) sites, generating a 3'-hydroxyl group and a 5'-terminal sugar phosphate. The protein is Probable endonuclease 4 of Mycoplasma pneumoniae (strain ATCC 29342 / M129 / Subtype 1) (Mycoplasmoides pneumoniae).